The following is a 72-amino-acid chain: uncharacterized protein (72 aa).

Its subcellular location is the cytoplasm. It localises to the nucleus. This is an uncharacterized protein from Saccharomyces cerevisiae (strain ATCC 204508 / S288c) (Baker's yeast).